We begin with the raw amino-acid sequence, 343 residues long: Ferrochelatase (343 aa).

Residues His191 and Glu270 each contribute to the Fe cation site.

Belongs to the ferrochelatase family.

The protein localises to the cytoplasm. The catalysed reaction is heme b + 2 H(+) = protoporphyrin IX + Fe(2+). The protein operates within porphyrin-containing compound metabolism; protoheme biosynthesis; protoheme from protoporphyrin-IX: step 1/1. Catalyzes the ferrous insertion into protoporphyrin IX. The polypeptide is Ferrochelatase (Phenylobacterium zucineum (strain HLK1)).